A 145-amino-acid polypeptide reads, in one-letter code: Ponticulin-like protein B (145 aa).

The N-terminal stretch at 1 to 22 (MLFIKSLLLLLSLIFAVSNATG) is a signal peptide. Asparagine 34 is a glycosylation site (N-linked (GlcNAc...) asparagine). Residues 107 to 126 (DTTSSSTSPSSTSPSSTSPA) are disordered. The segment covering 108–126 (TTSSSTSPSSTSPSSTSPA) has biased composition (low complexity). Residue serine 117 is the site of GPI-like-anchor amidated serine attachment. The propeptide at 118-145 (TSPSSTSPASTLIGSIAFVTLAALFALI) is removed in mature form.

The protein belongs to the ponticulin family. The GPI-like-anchor contains a phosphoceramide group, rather than a phosphatidyl group.

It is found in the cell membrane. In terms of biological role, binds F-actin and nucleates actin assembly. The polypeptide is Ponticulin-like protein B (ponB) (Dictyostelium discoideum (Social amoeba)).